The sequence spans 347 residues: MNPLIFTTIVLTIIMGTMIVMTSSHWLTVWIGFEMNMLAVIPILMKNYNPRSMEASTKYFLTQATASMLLMLAIIINLLYSGQWSITKPLNQTASIIMTLAMAMKLGLSPFHFWVPEVTQGIQLSSGLILLTWQKLAPMSILYQIFPTINLNLMLLMSVLSVAIGGWGGLNQTQLRKIMAYSSIAHMGWMTAIMAYNPTMTLLNLVIYILLTTTTFMMFMLNSSTTTLSLSHTWNKAPLLTMTILTIMLSMGGLPPLSGFLPKWMIIQEMVKNDNIITPTIMAVTALLNLYFYMRLTYSTSLTMFPSTNNMKMKWQLNNTKSTAHVSPLIILSTLALPLSPILMLLE.

The next 11 membrane-spanning stretches (helical) occupy residues 1–21, 25–45, 59–79, 96–116, 122–142, 145–165, 178–198, 201–221, 237–257, 276–296, and 326–346; these read MNPLIFTTIVLTIIMGTMIVM, HWLTVWIGFEMNMLAVIPILM, YFLTQATASMLLMLAIIINLL, IIMTLAMAMKLGLSPFHFWVP, IQLSSGLILLTWQKLAPMSIL, IFPTINLNLMLLMSVLSVAIG, IMAYSSIAHMGWMTAIMAYNP, TLLNLVIYILLTTTTFMMFML, APLLTMTILTIMLSMGGLPPL, IITPTIMAVTALLNLYFYMRL, and VSPLIILSTLALPLSPILMLL.

It belongs to the complex I subunit 2 family. In terms of assembly, core subunit of respiratory chain NADH dehydrogenase (Complex I) which is composed of 45 different subunits. Interacts with TMEM242.

Its subcellular location is the mitochondrion inner membrane. It carries out the reaction a ubiquinone + NADH + 5 H(+)(in) = a ubiquinol + NAD(+) + 4 H(+)(out). In terms of biological role, core subunit of the mitochondrial membrane respiratory chain NADH dehydrogenase (Complex I) which catalyzes electron transfer from NADH through the respiratory chain, using ubiquinone as an electron acceptor. Essential for the catalytic activity and assembly of complex I. The chain is NADH-ubiquinone oxidoreductase chain 2 from Boneia bidens (Manado fruit bat).